Consider the following 214-residue polypeptide: MRHILVTGFEPFGGETLNPSWEVVKQLEGMTIDDCRVVTRQLPCVFGESLTLLNSAIDELNPTVVIAVGQAGGRVDITVERVGINVDDARIPDNRGQQPIDVAIVPDGPAAWFSSLPIKAMVAAMREKGIPASVSQTAGTFVCNHVMYGLLHKIRERTNVKGGFIHIPYLPEQAAAHAGAPSMATQTVKAALEIALTVALRQSSDINAVGGATH.

Catalysis depends on residues Glu-80, Cys-143, and His-166.

This sequence belongs to the peptidase C15 family. In terms of assembly, homotetramer.

It localises to the cytoplasm. The catalysed reaction is Release of an N-terminal pyroglutamyl group from a polypeptide, the second amino acid generally not being Pro.. Functionally, removes 5-oxoproline from various penultimate amino acid residues except L-proline. The polypeptide is Pyrrolidone-carboxylate peptidase (Enterobacter sp. (strain 638)).